The primary structure comprises 407 residues: Growth/differentiation factor 11 (407 aa).

Positions 1–24 (MVLAAPLLLGFLLLALELRPRGEA) are cleaved as a signal peptide. Positions 25-298 (AEGPAAAAAA…VLENTKRSRR (274 aa)) are excised as a propeptide. An N-linked (GlcNAc...) asparagine glycan is attached at Asn-94. 4 disulfide bridges follow: Cys-304–Cys-314, Cys-313–Cys-372, Cys-341–Cys-404, and Cys-345–Cys-406.

This sequence belongs to the TGF-beta family. As to quaternary structure, homodimer; disulfide-linked. Interacts directly with ACVR2B. Interacts directly with ACVR2A. Interacts with ACVR1B, TGFBR1 and ACVR1C in an ACVR2B-dependent manner. Interacts with FST isoform 2/FS-288. Synthesized as large precursor molecule that undergoes proteolytic cleavage by furin-like proteases. This produces an inactive form consisting of the mature C-terminal portion non-covalently bound to its cleaved N-terminal propeptide. Activation of the mature form requires additional cleavage of the propeptide by a tolloid-like metalloproteinase. In the embryo, strong expression is seen in the palatal epithelia, including the medial edge epithelial and midline epithelial seam of the palatal shelves. Less pronounced expression is also seen throughout the palatal shelf and tongue mesenchyme.

Its subcellular location is the secreted. Secreted signal that acts globally to regulate anterior/posterior axial patterning during development. May play critical roles in patterning both mesodermal and neural tissues. It is required for proper vertebral patterning and orofacial development. Signals through activin receptors type-2, ACVR2A and ACVR2B, and activin receptors type-1, ACVR1B, ACVR1C and TGFBR1 leading to the phosphorylation of SMAD2 and SMAD3. The protein is Growth/differentiation factor 11 (GDF11) of Homo sapiens (Human).